Reading from the N-terminus, the 215-residue chain is Leucyl/phenylalanyl-tRNA--protein transferase (215 aa).

The protein belongs to the L/F-transferase family.

The protein localises to the cytoplasm. The enzyme catalyses N-terminal L-lysyl-[protein] + L-leucyl-tRNA(Leu) = N-terminal L-leucyl-L-lysyl-[protein] + tRNA(Leu) + H(+). It catalyses the reaction N-terminal L-arginyl-[protein] + L-leucyl-tRNA(Leu) = N-terminal L-leucyl-L-arginyl-[protein] + tRNA(Leu) + H(+). The catalysed reaction is L-phenylalanyl-tRNA(Phe) + an N-terminal L-alpha-aminoacyl-[protein] = an N-terminal L-phenylalanyl-L-alpha-aminoacyl-[protein] + tRNA(Phe). Functionally, functions in the N-end rule pathway of protein degradation where it conjugates Leu, Phe and, less efficiently, Met from aminoacyl-tRNAs to the N-termini of proteins containing an N-terminal arginine or lysine. This chain is Leucyl/phenylalanyl-tRNA--protein transferase, found in Campylobacter jejuni subsp. jejuni serotype O:6 (strain 81116 / NCTC 11828).